We begin with the raw amino-acid sequence, 338 residues long: P2Y purinoceptor 14 (338 aa).

The Extracellular segment spans residues 1–29; sequence MINSTSTQPPDESCSQNLLITQQIIPVLY. N3 is a glycosylation site (N-linked (GlcNAc...) asparagine). The chain crosses the membrane as a helical span at residues 30–50; it reads CMVFIAGILLNGVSGWIFFYV. Topologically, residues 51 to 55 are cytoplasmic; sequence PSSKS. The helical transmembrane segment at 56–76 threads the bilayer; sequence FIIYLKNIVIADFVMSLTFPF. The Extracellular portion of the chain corresponds to 77 to 96; it reads KILGDSGLGPWQLNVFVCRV. The cysteines at positions 94 and 172 are disulfide-linked. The chain crosses the membrane as a helical span at residues 97 to 117; sequence SAVLFYVNMYVSIVFFGLISF. The Cytoplasmic portion of the chain corresponds to 118–139; that stretch reads DRYYKIVKPLWTSFIQSVSYSK. The chain crosses the membrane as a helical span at residues 140–160; that stretch reads LLSVIVWMLMLLLAVPNIILT. N161 is a glycosylation site (N-linked (GlcNAc...) asparagine). The Extracellular portion of the chain corresponds to 161–188; that stretch reads NQSVREVTQIKCIELKSELGRKWHKASN. A helical membrane pass occupies residues 189-209; that stretch reads YIFVAIFWIVFLLLIVFYTAI. Over 210–234 the chain is Cytoplasmic; sequence TKKIFKSHLKSSRNSTSVKKKSSRN. A helical membrane pass occupies residues 235 to 255; that stretch reads IFSIVFVFFVCFVPYHIARIP. The Extracellular portion of the chain corresponds to 256-278; that stretch reads YTKSQTEAHYSCQSKEILRYMKE. The helical transmembrane segment at 279–299 threads the bilayer; that stretch reads FTLLLSAANVCLDPIIYFFLC. The Cytoplasmic portion of the chain corresponds to 300-338; it reads QPFREILCKKLHIPLKAQNDLDISRIKRGNTTLESTDTL.

Belongs to the G-protein coupled receptor 1 family. In terms of tissue distribution, highest expression in the placenta, adipose tissue, stomach and intestine, intermediate levels in the brain, spleen, lung and heart, lowest levels in the kidney.

The protein resides in the cell membrane. Receptor for UDP-glucose and other UDP-sugar coupled to G-proteins. Not activated by ATP, ADP, UTP or ATP. The chain is P2Y purinoceptor 14 (P2RY14) from Homo sapiens (Human).